Reading from the N-terminus, the 894-residue chain is E3 ubiquitin-protein ligase SH3RF1 (894 aa).

The RING-type zinc-finger motif lies at 12–53 (CPVCLERLDASAKVLPCQHTFCKRCLLGIVGSRNELRCPECR). 2 consecutive SH3 domains span residues 134–193 (PQLP…IIKP) and 196–259 (QPPP…FNSA). The segment at 274–323 (VDTAECPSATAAQSSSASKHSDTKKNTRKRHSFTSLTMANKSSQASQNRH) is disordered. The segment covering 281 to 291 (SATAAQSSSAS) has biased composition (low complexity). The tract at residues 293–363 (HSDTKKNTRK…APSQVHISTT (71 aa)) is interaction with RAC1. Phosphoserine is present on Ser305. The span at 306 to 322 (FTSLTMANKSSQASQNR) shows a compositional bias: polar residues. Residues 448-551 (HLRPQTRPSV…STAGGPAQKP (104 aa)) form an interaction with AKT2 region. Residues 453-514 (TRPSVYVAIY…PGNYVAPVTR (62 aa)) enclose the SH3 3 domain. Disordered stretches follow at residues 526–556 (MSTA…GNGV) and 682–751 (LETE…PTLD). At Ser540 the chain carries Phosphoserine. The span at 700 to 713 (SPESAASACGNSSA) shows a compositional bias: polar residues. Positions 715–726 (KPDKDSKKEKKG) are enriched in basic and acidic residues. Ser743 bears the Phosphoserine mark. The SH3 4 domain maps to 835–894 (VVCERHRVVVSYPPQSEAELELKEGDIVFVHKKREDGWFKGTLQRNGKTGLFPGSFVENI).

The protein belongs to the SH3RF family. In terms of assembly, interacts with HERP1. Interacts with RAC1; in a GTP-dependent manner. Interacts with MAP3K10/MLK2 and MAP3K11/MLK3. Interacts with MAPK8IP; this interaction leads to the PJAC complex (POSH-JIP or SH3RF1/MAPK8IP apoptotic complex) with a 1:1 ratio. Interacts with SIAH1. Probably part of a signaling complex that may contain SH3RF1, MAPK8IP, DLK1, MAP2K4/MKK4, MAP2K7/MKK7, MAPK8/JNK1, MAPK9/JNK2, AKT1 and AKT2. Found in a complex with RAC2, MAP3K7/TAK1, MAP2K7/MKK7, MAPK8IP1/JIP1, MAPK8/JNK1 and MAPK9/JNK2. Found in a complex with RAC1, MAP3K11/MLK3, MAP2K7/MKK7, MAPK8IP1/JIP1 and MAPK8/JNK1. Interacts with SH3RF2. Phosphorylated at Ser-305 by AKT1 and AKT2. When phosphorylated, it has reduced ability to bind Rac. In terms of processing, autoubiquitinated. Ubiquitinated by SH3RF2, leading to proteasome-mediated degradation.

It localises to the cytoplasm. Its subcellular location is the perinuclear region. It is found in the cell projection. The protein localises to the lamellipodium. The protein resides in the golgi apparatus. It localises to the trans-Golgi network. The enzyme catalyses S-ubiquitinyl-[E2 ubiquitin-conjugating enzyme]-L-cysteine + [acceptor protein]-L-lysine = [E2 ubiquitin-conjugating enzyme]-L-cysteine + N(6)-ubiquitinyl-[acceptor protein]-L-lysine.. Its pathway is protein modification; protein ubiquitination. Functionally, has E3 ubiquitin-protein ligase activity. In the absence of an external substrate, it can catalyze self-ubiquitination. Stimulates ubiquitination of potassium channel KCNJ1, enhancing it's dynamin-dependent and clathrin-independent endocytosis. Acts as a scaffold protein that coordinates with MAPK8IP1/JIP1 in organizing different components of the JNK pathway, including RAC1 or RAC2, MAP3K11/MLK3 or MAP3K7/TAK1, MAP2K7/MKK7, MAPK8/JNK1 and/or MAPK9/JNK2 into a functional multiprotein complex to ensure the effective activation of the JNK signaling pathway. Regulates the differentiation of CD4(+) and CD8(+) T-cells and promotes T-helper 1 (Th1) cell differentiation. Regulates the activation of MAPK8/JNK1 and MAPK9/JNK2 in CD4(+) T-cells and the activation of MAPK8/JNK1 in CD8(+) T-cells. Plays a crucial role in the migration of neocortical neurons in the developing brain. Controls proper cortical neuronal migration and the formation of proximal cytoplasmic dilation in the leading process (PCDLP) in migratory neocortical neurons by regulating the proper localization of activated RAC1 and F-actin assembly. In Rattus norvegicus (Rat), this protein is E3 ubiquitin-protein ligase SH3RF1 (Sh3rf1).